The following is a 208-amino-acid chain: High frequency lysogenization protein HflD homolog (208 aa).

The stretch at 91–125 forms a coiled coil; sequence LMVLERKLNANKQAMNQLGERLGQLERQLAHFDLE.

The protein belongs to the HflD family.

It is found in the cytoplasm. The protein resides in the cell inner membrane. This is High frequency lysogenization protein HflD homolog from Serratia proteamaculans (strain 568).